Reading from the N-terminus, the 386-residue chain is Protein phosphatase methylesterase 1 (386 aa).

The tract at residues 1-38 (MSALEKSMHLGRLPSRPPLPGSGGSQSGAKMRMGPGRK) is disordered. Serine 15 is modified (phosphoserine). Residue arginine 16 is modified to Asymmetric dimethylarginine; alternate. Omega-N-methylarginine; alternate is present on arginine 16. Active-site residues include serine 156 and aspartate 181. Over residues 255–265 (IEEEEEDEEGS) the composition is skewed to acidic residues. The tract at residues 255–280 (IEEEEEDEEGSESVNKRKKEDDMETK) is disordered. The segment covering 268–280 (VNKRKKEDDMETK) has biased composition (basic and acidic residues). Residue histidine 349 is part of the active site.

The protein belongs to the AB hydrolase superfamily. As to quaternary structure, binds PPP2CA and PPP2CB. Phosphorylated by SIK1 following increases in intracellular sodium, leading to dissociation from the protein phosphatase 2A (PP2A) complex and subsequent dephosphorylation of sodium/potassium-transporting ATPase ATP1A1. As to expression, ubiquitous. Highly expressed in testis and brain.

It carries out the reaction [phosphatase 2A protein]-C-terminal L-leucine methyl ester + H2O = [phosphatase 2A protein]-C-terminal L-leucine + methanol + H(+). Its function is as follows. Demethylates proteins that have been reversibly carboxymethylated. Demethylates PPP2CB (in vitro) and PPP2CA. Binding to PPP2CA displaces the manganese ion and inactivates the enzyme. In Mus musculus (Mouse), this protein is Protein phosphatase methylesterase 1 (Ppme1).